The following is a 299-amino-acid chain: tRNA dimethylallyltransferase (299 aa).

11–18 (GPTGSGKS) lines the ATP pocket. Residue 13–18 (TGSGKS) coordinates substrate.

Belongs to the IPP transferase family. In terms of assembly, monomer. The cofactor is Mg(2+).

The enzyme catalyses adenosine(37) in tRNA + dimethylallyl diphosphate = N(6)-dimethylallyladenosine(37) in tRNA + diphosphate. Functionally, catalyzes the transfer of a dimethylallyl group onto the adenine at position 37 in tRNAs that read codons beginning with uridine, leading to the formation of N6-(dimethylallyl)adenosine (i(6)A). This is tRNA dimethylallyltransferase from Pseudarthrobacter chlorophenolicus (strain ATCC 700700 / DSM 12829 / CIP 107037 / JCM 12360 / KCTC 9906 / NCIMB 13794 / A6) (Arthrobacter chlorophenolicus).